A 157-amino-acid chain; its full sequence is Mediator of RNA polymerase II transcription subunit 10 (157 aa).

This sequence belongs to the Mediator complex subunit 10 family. Component of the Mediator complex, which is composed of at least 21 subunits that form three structurally distinct submodules. The Mediator head module contains MED6, MED8, MED11, SRB4/MED17, SRB5/MED18, ROX3/MED19, SRB2/MED20 and SRB6/MED22, the middle module contains MED1, MED4, NUT1/MED5, MED7, CSE2/MED9, NUT2/MED10, SRB7/MED21 and SOH1/MED31, and the tail module contains MED2, PGD1/MED3, RGR1/MED14, GAL11/MED15 and SIN4/MED16. The head and the middle modules interact directly with RNA polymerase II, whereas the elongated tail module interacts with gene-specific regulatory proteins. NUT2/MED10 interacts directly with SRB7/MED21.

It is found in the nucleus. Its function is as follows. Component of the Mediator complex, a coactivator involved in the regulated transcription of nearly all RNA polymerase II-dependent genes. Mediator functions as a bridge to convey information from gene-specific regulatory proteins to the basal RNA polymerase II transcription machinery. The Mediator complex, having a compact conformation in its free form, is recruited to promoters by direct interactions with regulatory proteins and serves for the assembly of a functional preinitiation complex with RNA polymerase II and the general transcription factors. The Mediator complex unfolds to an extended conformation and partially surrounds RNA polymerase II, specifically interacting with the unphosphorylated form of the C-terminal domain (CTD) of RNA polymerase II. The Mediator complex dissociates from the RNA polymerase II holoenzyme and stays at the promoter when transcriptional elongation begins. The sequence is that of Mediator of RNA polymerase II transcription subunit 10 (NUT2) from Saccharomyces cerevisiae (strain ATCC 204508 / S288c) (Baker's yeast).